Here is a 382-residue protein sequence, read N- to C-terminus: Mannitol-1-phosphate 5-dehydrogenase (382 aa).

Position 3–14 (3–14 (ALHFGAGNIGRG)) interacts with NAD(+). Lys-269 carries the N6-acetyllysine modification.

This sequence belongs to the mannitol dehydrogenase family.

The enzyme catalyses D-mannitol 1-phosphate + NAD(+) = beta-D-fructose 6-phosphate + NADH + H(+). The chain is Mannitol-1-phosphate 5-dehydrogenase from Escherichia coli O17:K52:H18 (strain UMN026 / ExPEC).